Here is a 197-residue protein sequence, read N- to C-terminus: MRLKQGSFLWYLYLDKIYCLLSVRNVKALAEYFHILDVHGKNTLNDVLFYHFLHHVTDLKKAQINIVFDMLDWNAVGEIDFEKFYMLVCMLLAHQNHLEGQFMYRHSRPVFDLLDLKGDLRIGAKNFEMYRFLFNIQKQELKDLFRDFDITGDNRLNYQEFKLYTIIYTDKLQKRQKTEEKEKGERKRSLYSKCHIK.

Residues Asp58 and Asp69 each coordinate Ca(2+). EF-hand domains lie at 59-94 (LKKAQINIVFDMLDWNAVGEIDFEKFYMLVCMLLAH), 100-135 (GQFMYRHSRPVFDLLDLKGDLRIGAKNFEMYRFLFN), and 136-171 (IQKQELKDLFRDFDITGDNRLNYQEFKLYTIIYTDK). Residues Asp149, Asp153, Arg155, and Glu160 each coordinate Ca(2+). Over residues 177–188 (KTEEKEKGERKR) the composition is skewed to basic and acidic residues. The disordered stretch occupies residues 177 to 197 (KTEEKEKGERKRSLYSKCHIK).

Component of the CatSper complex or CatSpermasome composed of the core pore-forming members CATSPER1, CATSPER2, CATSPER3 and CATSPER4 as well as auxiliary members CATSPERB, CATSPERG, CATSPERD, CATSPERE, CATSPERZ, C2CD6/CATSPERT, TMEM249, TMEM262 and EFCAB9. HSPA1 may be an additional auxiliary complex member. The core complex members CATSPER1, CATSPER2, CATSPER3 and CATSPER4 form a heterotetrameric channel. The auxiliary CATSPERB, CATSPERG, CATSPERD and CATSPERE subunits form a pavilion-like structure over the pore which stabilizes the complex through interactions with CATSPER4, CATSPER3, CATSPER1 and CATSPER2 respectively. TMEM262/CATSPERH interacts with CATSPERB, further stabilizing the complex. C2CD6/CATSPERT interacts at least with CATSPERD and is required for targeting the CatSper complex in the flagellar membrane. Interacts with CATSPERZ; the interaction is direct, Ca(2+)-dependent and connects EFCAB9 with the CatSper complex. Dissociates from CATSPERZ at elevated pH.

The protein localises to the cytoplasm. The protein resides in the cell projection. It is found in the cilium. It localises to the flagellum. Functionally, auxiliary component of the CatSper complex, a complex involved in sperm cell hyperactivation. pH-dependent Ca(2+) sensor required to activate the CatSper channel. Sperm cell hyperactivation is needed for sperm motility which is essential late in the preparation of sperm for fertilization. Associates with the CatSper complex via direct interaction with CATSPERZ, and senses intracellular Ca(2+). Together with CATSPERZ, associates with the CatSper channel pore and is required for the two-row structure of each single CatSper channel. In Homo sapiens (Human), this protein is EF-hand calcium-binding domain-containing protein 9.